The primary structure comprises 330 residues: tRNA U34 carboxymethyltransferase (330 aa).

Carboxy-S-adenosyl-L-methionine contacts are provided by residues K91, W105, K110, G130, 152–154 (DPS), 181–182 (IE), M196, Y200, and R315.

The protein belongs to the class I-like SAM-binding methyltransferase superfamily. CmoB family. As to quaternary structure, homotetramer.

The catalysed reaction is carboxy-S-adenosyl-L-methionine + 5-hydroxyuridine(34) in tRNA = 5-carboxymethoxyuridine(34) in tRNA + S-adenosyl-L-homocysteine + H(+). In terms of biological role, catalyzes carboxymethyl transfer from carboxy-S-adenosyl-L-methionine (Cx-SAM) to 5-hydroxyuridine (ho5U) to form 5-carboxymethoxyuridine (cmo5U) at position 34 in tRNAs. This chain is tRNA U34 carboxymethyltransferase, found in Shewanella denitrificans (strain OS217 / ATCC BAA-1090 / DSM 15013).